Consider the following 193-residue polypeptide: tRNA(Phe) 7-((3-amino-3-carboxypropyl)-4-demethylwyosine(37)-N(4))-methyltransferase (193 aa).

It belongs to the TYW3 family.

The enzyme catalyses 4-demethyl-7-[(3S)-3-amino-3-carboxypropyl]wyosine(37) in tRNA(Phe) + S-adenosyl-L-methionine = 7-[(3S)-3-amino-3-carboxypropyl]wyosine(37) in tRNA(Phe) + S-adenosyl-L-homocysteine + H(+). S-adenosyl-L-methionine-dependent methyltransferase that acts as a component of the wyosine derivatives biosynthesis pathway. Probably methylates N-4 position of wybutosine-86 to produce wybutosine-72. The polypeptide is tRNA(Phe) 7-((3-amino-3-carboxypropyl)-4-demethylwyosine(37)-N(4))-methyltransferase (Methanocaldococcus jannaschii (strain ATCC 43067 / DSM 2661 / JAL-1 / JCM 10045 / NBRC 100440) (Methanococcus jannaschii)).